We begin with the raw amino-acid sequence, 774 residues long: MLKLFSAFRKNKIWDFNGGIHPPEMKTQSNGTPLRQVPLAQRFVIPLKQHIGAEGELCVSVGDNVLRGQPLTRGRGKMLPVHAPTSGTVTAIAPHSTAHPSALAELSVIIDADGEDCWIPRDGWADYRSRSREELIERIHQFGVAGLGGAGFPTGVKLQGGGDKIETLIINAAECEPYITADDRLMQDCAAQVVEGIRILAHILQPREILIGIEDNKPQAISMLRAVLADSHDISLRVIPTKYPSGGAKQLTYILTGKQVPHGGRSSDIGVLMQNVGTAYAVKRAVIDGEPITERVVTLTGEAIARPGNVWARLGTPVRHLLNDAGFCPSADQMVIMGGPLMGFTLPWLDVPVVKITNCLLAPSANELGEPQEEQSCIRCSACADACPADLLPQQLYWFSKGQQHDKATTHNIADCIECGACAWVCPSNIPLVQYFRQEKAEIAAIRQEEKRAAEAKARFEARQARLEREKAARLERHKSAAVQPAAKDKDAIAAALARVKEKQAQATQPIVIKAGERPDNSAIIAAREARKAQARAKQAELQQTNDAATVADPRKTAVEAAIARAKARKLEQQQANAEPEQQVDPRKAAVEAAIARAKARKLEQQQANAEPEEQVDPRKAAVEAAIARAKARKLEQQQANAEPEEQIDPRKAAVEAAIARAKARKLEQQQQANAEPEEQVDPRKAAVEAAIARAKARKLEQQQQANAEPEEQVDPRKAAVEAAIARAKARKLEQQQANAEPEEQIDPRKAAVAAAIARAQAKKAAQQKVVNED.

4Fe-4S ferredoxin-type domains are found at residues 369–397 and 407–436; these read GEPQEEQSCIRCSACADACPADLLPQQLY and KATTHNIADCIECGACAWVCPSNIPLVQYF. Cys-377, Cys-380, Cys-383, Cys-387, Cys-416, Cys-419, Cys-422, and Cys-426 together coordinate [4Fe-4S] cluster. Residues 602 to 750 are disordered; that stretch reads KLEQQQANAE…EPEEQIDPRK (149 aa).

It belongs to the 4Fe4S bacterial-type ferredoxin family. RnfC subfamily. The complex is composed of six subunits: RsxA, RsxB, RsxC, RsxD, RsxE and RsxG. [4Fe-4S] cluster is required as a cofactor.

Its subcellular location is the cell inner membrane. In terms of biological role, part of a membrane-bound complex that couples electron transfer with translocation of ions across the membrane. Required to maintain the reduced state of SoxR. This is Ion-translocating oxidoreductase complex subunit C from Escherichia coli O6:K15:H31 (strain 536 / UPEC).